An 81-amino-acid polypeptide reads, in one-letter code: Polcalcin Syr v 3 (81 aa).

2 consecutive EF-hand domains span residues 3-38 (EEVAELERIFKRFDANGDGKISSSELGETLKTLGSV) and 41-73 (EEIQRMMAEIDTDGDGFISFEEFKDFARANSGL). Ca(2+)-binding residues include aspartate 16, asparagine 18, aspartate 20, lysine 22, glutamate 27, aspartate 51, aspartate 53, aspartate 55, and glutamate 62.

This Syringa vulgaris (Common lilac) protein is Polcalcin Syr v 3 (SYRV3).